Consider the following 87-residue polypeptide: Phosphoribosyl-ATP pyrophosphatase (87 aa).

This sequence belongs to the PRA-PH family.

The protein localises to the cytoplasm. The enzyme catalyses 1-(5-phospho-beta-D-ribosyl)-ATP + H2O = 1-(5-phospho-beta-D-ribosyl)-5'-AMP + diphosphate + H(+). Its pathway is amino-acid biosynthesis; L-histidine biosynthesis; L-histidine from 5-phospho-alpha-D-ribose 1-diphosphate: step 2/9. This is Phosphoribosyl-ATP pyrophosphatase from Bifidobacterium animalis subsp. lactis (strain AD011).